A 347-amino-acid chain; its full sequence is Isopentenyl-diphosphate delta-isomerase (347 aa).

9–10 lines the substrate pocket; it reads RK. FMN is bound by residues Ser-67, 68-70, Ser-98, and Asn-127; that span reads SMT. 98 to 100 is a binding site for substrate; that stretch reads SQR. Gln-162 is a substrate binding site. Mg(2+) is bound at residue Glu-163. FMN is bound by residues Lys-194, Thr-224, 274–276, and 295–296; these read GIR and AA.

This sequence belongs to the IPP isomerase type 2 family. As to quaternary structure, homooctamer. Dimer of tetramers. FMN is required as a cofactor. Requires NADPH as cofactor. Mg(2+) serves as cofactor.

Its subcellular location is the cytoplasm. The enzyme catalyses isopentenyl diphosphate = dimethylallyl diphosphate. Its function is as follows. Involved in the biosynthesis of isoprenoids. Catalyzes the 1,3-allylic rearrangement of the homoallylic substrate isopentenyl (IPP) to its allylic isomer, dimethylallyl diphosphate (DMAPP). The sequence is that of Isopentenyl-diphosphate delta-isomerase from Cronobacter sakazakii (strain ATCC BAA-894) (Enterobacter sakazakii).